We begin with the raw amino-acid sequence, 91 residues long: Putative regulatory protein Moth_0891 (91 aa).

This sequence belongs to the RemA family.

This is Putative regulatory protein Moth_0891 from Moorella thermoacetica (strain ATCC 39073 / JCM 9320).